Here is a 110-residue protein sequence, read N- to C-terminus: Envelope glycoprotein N (110 aa).

An N-terminal signal peptide occupies residues 1 to 17; sequence MTASTVALALFVASILG. Residues 18-80 lie on the Virion surface side of the membrane; that stretch reads HCWVTANSTG…SLSSFSSVWA (63 aa). Polar residues predominate over residues 28-41; that stretch reads VASSTERSSPSTAG. The segment at 28–51 is disordered; sequence VASSTERSSPSTAGLSARPSPGPT. A helical membrane pass occupies residues 81 to 101; it reads LINALLVVVATFFYLVYLCFF. The Intravirion portion of the chain corresponds to 102 to 110; the sequence is KFVDEVVHA.

This sequence belongs to the herpesviridae glycoprotein N family. As to quaternary structure, interacts (via N-terminus) with gM (via N-terminus). The gM-gN heterodimer forms the gCII complex. In terms of processing, O-glycosylated. Contains alpha 2,6-sialic acid residues. N-glycosylated.

It localises to the virion membrane. The protein localises to the host membrane. The protein resides in the host Golgi apparatus. Its subcellular location is the host trans-Golgi network. Its function is as follows. Envelope glycoprotein necessary for proper maturation of gM and modulation of its membrane fusion activity. Also plays a critical role in virion morphogenesis. This is Envelope glycoprotein N from Homo sapiens (Human).